A 375-amino-acid chain; its full sequence is Phytanoyl-CoA hydroxylase-interacting protein-like (375 aa).

S11, S12, and S15 each carry phosphoserine. N22 carries N-linked (GlcNAc...) asparagine glycosylation. S24 carries the post-translational modification Phosphoserine. N36 carries N-linked (GlcNAc...) asparagine glycosylation. The 110-residue stretch at 51-160 folds into the Fibronectin type-III domain; sequence VPHNIKINNI…EIIEFCTADY (110 aa).

This sequence belongs to the PHYHIP family.

In terms of biological role, may play a role in the development of the central system. The protein is Phytanoyl-CoA hydroxylase-interacting protein-like (Phyhipl) of Mus musculus (Mouse).